Reading from the N-terminus, the 163-residue chain is Transmembrane protein 278 (163 aa).

The tract at residues 1–37 is disordered; that stretch reads MSEQGRETEEEEGGGGASDTAPMLPRGPPDHQASALT. Helical transmembrane passes span 51-71 and 105-125; these read LLAGLLLHLLLPAAAFLLVLL and AALIVFGLLSLPPLLVLASAV. A compositionally biased stretch (pro residues) spans 136–148; sequence LLPPPAGTPGPRR. A disordered region spans residues 136–156; that stretch reads LLPPPAGTPGPRRPPGRPDED.

This sequence belongs to the TMEM88 family.

Its subcellular location is the membrane. The sequence is that of Transmembrane protein 278 from Homo sapiens (Human).